The chain runs to 626 residues: Phosphomethylpyrimidine synthase (626 aa).

A disordered region spans residues 1–27; sequence MSKQEKAISLSESAQVDQQSVQPLPNS. Over residues 10-25 the composition is skewed to polar residues; the sequence is LSESAQVDQQSVQPLP. Substrate contacts are provided by residues N232, M261, Y290, H326, 346–348, 387–390, and E426; these read SRG and DGLR. H430 contributes to the Zn(2+) binding site. Y453 is a substrate binding site. H494 contributes to the Zn(2+) binding site. Residues C574, C577, and C582 each coordinate [4Fe-4S] cluster.

This sequence belongs to the ThiC family. As to quaternary structure, homodimer. Requires [4Fe-4S] cluster as cofactor.

The enzyme catalyses 5-amino-1-(5-phospho-beta-D-ribosyl)imidazole + S-adenosyl-L-methionine = 4-amino-2-methyl-5-(phosphooxymethyl)pyrimidine + CO + 5'-deoxyadenosine + formate + L-methionine + 3 H(+). Its pathway is cofactor biosynthesis; thiamine diphosphate biosynthesis. Its function is as follows. Catalyzes the synthesis of the hydroxymethylpyrimidine phosphate (HMP-P) moiety of thiamine from aminoimidazole ribotide (AIR) in a radical S-adenosyl-L-methionine (SAM)-dependent reaction. The polypeptide is Phosphomethylpyrimidine synthase (Pseudomonas entomophila (strain L48)).